The sequence spans 490 residues: Cytochrome P450 2C9 (490 aa).

Cysteine 435 contacts heme.

The protein belongs to the cytochrome P450 family. Heme serves as cofactor.

The protein resides in the endoplasmic reticulum membrane. It is found in the microsome membrane. The enzyme catalyses an organic molecule + reduced [NADPH--hemoprotein reductase] + O2 = an alcohol + oxidized [NADPH--hemoprotein reductase] + H2O + H(+). The catalysed reaction is (5Z,8Z,11Z,14Z)-eicosatetraenoate + reduced [NADPH--hemoprotein reductase] + O2 = (8R,9S)-epoxy-(5Z,11Z,14Z)-eicosatrienoate + oxidized [NADPH--hemoprotein reductase] + H2O + H(+). It carries out the reaction (5Z,8Z,11Z,14Z)-eicosatetraenoate + reduced [NADPH--hemoprotein reductase] + O2 = (8S,9R)-epoxy-(5Z,11Z,14Z)-eicosatrienoate + oxidized [NADPH--hemoprotein reductase] + H2O + H(+). It catalyses the reaction (5Z,8Z,11Z,14Z)-eicosatetraenoate + reduced [NADPH--hemoprotein reductase] + O2 = (11R,12S)-epoxy-(5Z,8Z,14Z)-eicosatrienoate + oxidized [NADPH--hemoprotein reductase] + H2O + H(+). The enzyme catalyses (5Z,8Z,11Z,14Z)-eicosatetraenoate + reduced [NADPH--hemoprotein reductase] + O2 = (11S,12R)-epoxy-(5Z,8Z,14Z)-eicosatrienoate + oxidized [NADPH--hemoprotein reductase] + H2O + H(+). The catalysed reaction is (5Z,8Z,11Z,14Z)-eicosatetraenoate + reduced [NADPH--hemoprotein reductase] + O2 = (14R,15S)-epoxy-(5Z,8Z,11Z)-eicosatrienoate + oxidized [NADPH--hemoprotein reductase] + H2O + H(+). It carries out the reaction (5Z,8Z,11Z,14Z)-eicosatetraenoate + reduced [NADPH--hemoprotein reductase] + O2 = (14S,15R)-epoxy-(5Z,8Z,11Z)-eicosatrienoate + oxidized [NADPH--hemoprotein reductase] + H2O + H(+). It catalyses the reaction (5Z,8Z,11Z,14Z,17Z)-eicosapentaenoate + reduced [NADPH--hemoprotein reductase] + O2 = 8,9-epoxy-(5Z,11Z,14Z,17Z)-eicosatetraenoate + oxidized [NADPH--hemoprotein reductase] + H2O + H(+). The enzyme catalyses (5Z,8Z,11Z,14Z,17Z)-eicosapentaenoate + reduced [NADPH--hemoprotein reductase] + O2 = 11,12-epoxy-(5Z,8Z,14Z,17Z)-eicosatetraenoate + oxidized [NADPH--hemoprotein reductase] + H2O + H(+). The catalysed reaction is (5Z,8Z,11Z,14Z,17Z)-eicosapentaenoate + reduced [NADPH--hemoprotein reductase] + O2 = 14,15-epoxy-(5Z,8Z,11Z,17Z)-eicosatetraenoate + oxidized [NADPH--hemoprotein reductase] + H2O + H(+). It carries out the reaction (5Z,8Z,11Z,14Z,17Z)-eicosapentaenoate + reduced [NADPH--hemoprotein reductase] + O2 = (17R,18S)-epoxy-(5Z,8Z,11Z,14Z)-eicosatetraenoate + oxidized [NADPH--hemoprotein reductase] + H2O + H(+). It catalyses the reaction cholesterol + reduced [NADPH--hemoprotein reductase] + O2 = 25-hydroxycholesterol + oxidized [NADPH--hemoprotein reductase] + H2O + H(+). The enzyme catalyses 17beta-estradiol + reduced [NADPH--hemoprotein reductase] + O2 = 2-hydroxy-17beta-estradiol + oxidized [NADPH--hemoprotein reductase] + H2O + H(+). The catalysed reaction is estrone + reduced [NADPH--hemoprotein reductase] + O2 = 2-hydroxyestrone + oxidized [NADPH--hemoprotein reductase] + H2O + H(+). It carries out the reaction (5Z,8Z,11Z,14Z)-eicosatetraenoate + reduced [NADPH--hemoprotein reductase] + O2 = (11R)-hydroxy-(5Z,8Z,12E,14Z)-eicosatetraenoate + oxidized [NADPH--hemoprotein reductase] + H2O + H(+). It catalyses the reaction (5Z,8Z,11Z,14Z)-eicosatetraenoate + reduced [NADPH--hemoprotein reductase] + O2 = (12R)-hydroxy-(5Z,8Z,10E,14Z)-eicosatetraenoate + oxidized [NADPH--hemoprotein reductase] + H2O + H(+). The enzyme catalyses (5Z,8Z,11Z,14Z)-eicosatetraenoate + reduced [NADPH--hemoprotein reductase] + O2 = (15R)-hydroxy-(5Z,8Z,11Z,13E)-eicosatetraenoate + oxidized [NADPH--hemoprotein reductase] + H2O + H(+). The catalysed reaction is (5Z,8Z,11Z,14Z)-eicosatetraenoate + reduced [NADPH--hemoprotein reductase] + O2 = 10-hydroxy-(5Z,8Z,11Z,14Z)-eicosatetraenoate + oxidized [NADPH--hemoprotein reductase] + H2O + H(+). It carries out the reaction (9Z,12Z)-octadecadienoate + reduced [NADPH--hemoprotein reductase] + O2 = (13R)-hydroxy-(9Z,11E)-octadecadienoate + oxidized [NADPH--hemoprotein reductase] + H2O + H(+). It catalyses the reaction (9Z,12Z)-octadecadienoate + reduced [NADPH--hemoprotein reductase] + O2 = (9R)-hydroxy-(10E,12Z)-octadecadienoate + oxidized [NADPH--hemoprotein reductase] + H2O + H(+). The enzyme catalyses (5Z,8Z,11Z,14Z)-eicosatetraenoate + reduced [NADPH--hemoprotein reductase] + O2 = 19-hydroxy-(5Z,8Z,11Z,14Z)-eicosatetraenoate + oxidized [NADPH--hemoprotein reductase] + H2O + H(+). The catalysed reaction is (5Z,8Z,11Z,14Z)-eicosatetraenoate + reduced [NADPH--hemoprotein reductase] + O2 = 13(S)-hydroxy-(5Z,8Z,11Z,14Z)-eicosatetraenoate + oxidized [NADPH--hemoprotein reductase] + H2O + H(+). It carries out the reaction (5Z,8Z,11Z,14Z)-eicosatetraenoate + reduced [NADPH--hemoprotein reductase] + O2 = 14,15-epoxy-(5Z,8Z,11Z)-eicosatrienoate + oxidized [NADPH--hemoprotein reductase] + H2O + H(+). It catalyses the reaction (5Z,8Z,11Z,14Z)-eicosatetraenoate + reduced [NADPH--hemoprotein reductase] + O2 = 11,12-epoxy-(5Z,8Z,14Z)-eicosatrienoate + oxidized [NADPH--hemoprotein reductase] + H2O + H(+). The enzyme catalyses (5Z,8Z,11Z,14Z)-eicosatetraenoate + reduced [NADPH--hemoprotein reductase] + O2 = 13-hydroxy-(5Z,8Z,11Z,14Z)-eicosatetraenoate + oxidized [NADPH--hemoprotein reductase] + H2O + H(+). The catalysed reaction is (4R)-limonene + reduced [NADPH--hemoprotein reductase] + O2 = (1R,5S)-carveol + oxidized [NADPH--hemoprotein reductase] + H2O + H(+). It carries out the reaction (4S)-limonene + reduced [NADPH--hemoprotein reductase] + O2 = (1S,5R)-carveol + oxidized [NADPH--hemoprotein reductase] + H2O + H(+). It catalyses the reaction (4S)-limonene + reduced [NADPH--hemoprotein reductase] + O2 = (4S)-perillyl alcohol + oxidized [NADPH--hemoprotein reductase] + H2O + H(+). Its pathway is lipid metabolism; arachidonate metabolism. It participates in steroid metabolism; cholesterol metabolism. It functions in the pathway terpene metabolism; (4R)-limonene degradation. A cytochrome P450 monooxygenase involved in the metabolism of various endogenous substrates, including fatty acids and steroids. Mechanistically, uses molecular oxygen inserting one oxygen atom into a substrate, and reducing the second into a water molecule, with two electrons provided by NADPH via cytochrome P450 reductase (NADPH--hemoprotein reductase). Catalyzes the epoxidation of double bonds of polyunsaturated fatty acids (PUFA). Catalyzes the hydroxylation of carbon-hydrogen bonds. Metabolizes cholesterol toward 25-hydroxycholesterol, a physiological regulator of cellular cholesterol homeostasis. Exhibits low catalytic activity for the formation of catechol estrogens from 17beta-estradiol (E2) and estrone (E1), namely 2-hydroxy E1 and E2. Catalyzes bisallylic hydroxylation and hydroxylation with double-bond migration of polyunsaturated fatty acids (PUFA). Also metabolizes plant monoterpenes such as limonene. Oxygenates (R)- and (S)-limonene to produce carveol and perillyl alcohol. Contributes to the wide pharmacokinetics variability of the metabolism of drugs such as S-warfarin, diclofenac, phenytoin, tolbutamide and losartan. The polypeptide is Cytochrome P450 2C9 (Homo sapiens (Human)).